The sequence spans 284 residues: ATP phosphoribosyltransferase (284 aa).

Belongs to the ATP phosphoribosyltransferase family. Long subfamily. As to quaternary structure, equilibrium between an active dimeric form, an inactive hexameric form and higher aggregates. Interconversion between the various forms is largely reversible and is influenced by the natural substrates and inhibitors of the enzyme. Mg(2+) is required as a cofactor.

It is found in the cytoplasm. It catalyses the reaction 1-(5-phospho-beta-D-ribosyl)-ATP + diphosphate = 5-phospho-alpha-D-ribose 1-diphosphate + ATP. Its pathway is amino-acid biosynthesis; L-histidine biosynthesis; L-histidine from 5-phospho-alpha-D-ribose 1-diphosphate: step 1/9. Its activity is regulated as follows. Feedback inhibited by histidine. Its function is as follows. Catalyzes the condensation of ATP and 5-phosphoribose 1-diphosphate to form N'-(5'-phosphoribosyl)-ATP (PR-ATP). Has a crucial role in the pathway because the rate of histidine biosynthesis seems to be controlled primarily by regulation of HisG enzymatic activity. This chain is ATP phosphoribosyltransferase, found in Mycobacterium avium (strain 104).